Here is a 404-residue protein sequence, read N- to C-terminus: Formate-dependent phosphoribosylglycinamide formyltransferase (404 aa).

N(1)-(5-phospho-beta-D-ribosyl)glycinamide contacts are provided by residues 25 to 26 (EL) and Glu-85. ATP contacts are provided by residues Arg-118, Lys-159, 164–169 (SSGKGQ), 199–202 (EGFI), and Glu-207. Residues 123–318 (RLAAEELGLP…EFELHARAIL (196 aa)) form the ATP-grasp domain. Mg(2+) is bound by residues Glu-277 and Glu-289. Residues Asp-296, Lys-365, and 372-373 (RR) contribute to the N(1)-(5-phospho-beta-D-ribosyl)glycinamide site.

The protein belongs to the PurK/PurT family. Homodimer.

The catalysed reaction is N(1)-(5-phospho-beta-D-ribosyl)glycinamide + formate + ATP = N(2)-formyl-N(1)-(5-phospho-beta-D-ribosyl)glycinamide + ADP + phosphate + H(+). It participates in purine metabolism; IMP biosynthesis via de novo pathway; N(2)-formyl-N(1)-(5-phospho-D-ribosyl)glycinamide from N(1)-(5-phospho-D-ribosyl)glycinamide (formate route): step 1/1. Involved in the de novo purine biosynthesis. Catalyzes the transfer of formate to 5-phospho-ribosyl-glycinamide (GAR), producing 5-phospho-ribosyl-N-formylglycinamide (FGAR). Formate is provided by PurU via hydrolysis of 10-formyl-tetrahydrofolate. The chain is Formate-dependent phosphoribosylglycinamide formyltransferase from Burkholderia pseudomallei (strain 1106a).